Here is a 54-residue protein sequence, read N- to C-terminus: Putative neurotoxin-I (54 aa).

3 disulfides stabilise this stretch: Cys20–Cys42, Cys28–Cys51, and Cys32–Cys53.

In terms of tissue distribution, expressed by the venom gland.

It is found in the secreted. The chain is Putative neurotoxin-I from Lychas mucronatus (Chinese swimming scorpion).